A 171-amino-acid chain; its full sequence is 3-hydroxydecanoyl-[acyl-carrier-protein] dehydratase (171 aa).

His71 is a catalytic residue.

It belongs to the thioester dehydratase family. FabA subfamily. As to quaternary structure, homodimer.

The protein resides in the cytoplasm. The enzyme catalyses a (3R)-hydroxyacyl-[ACP] = a (2E)-enoyl-[ACP] + H2O. It catalyses the reaction (3R)-hydroxydecanoyl-[ACP] = (2E)-decenoyl-[ACP] + H2O. It carries out the reaction (2E)-decenoyl-[ACP] = (3Z)-decenoyl-[ACP]. It participates in lipid metabolism; fatty acid biosynthesis. Its function is as follows. Necessary for the introduction of cis unsaturation into fatty acids. Catalyzes the dehydration of (3R)-3-hydroxydecanoyl-ACP to E-(2)-decenoyl-ACP and then its isomerization to Z-(3)-decenoyl-ACP. Can catalyze the dehydratase reaction for beta-hydroxyacyl-ACPs with saturated chain lengths up to 16:0, being most active on intermediate chain length. The sequence is that of 3-hydroxydecanoyl-[acyl-carrier-protein] dehydratase from Sinorhizobium medicae (strain WSM419) (Ensifer medicae).